The following is an 89-amino-acid chain: Small ribosomal subunit protein uS15 (89 aa).

Belongs to the universal ribosomal protein uS15 family. In terms of assembly, part of the 30S ribosomal subunit. Forms a bridge to the 50S subunit in the 70S ribosome, contacting the 23S rRNA.

Functionally, one of the primary rRNA binding proteins, it binds directly to 16S rRNA where it helps nucleate assembly of the platform of the 30S subunit by binding and bridging several RNA helices of the 16S rRNA. Its function is as follows. Forms an intersubunit bridge (bridge B4) with the 23S rRNA of the 50S subunit in the ribosome. The chain is Small ribosomal subunit protein uS15 from Parvibaculum lavamentivorans (strain DS-1 / DSM 13023 / NCIMB 13966).